Consider the following 438-residue polypeptide: Na(+)/H(+) antiporter NhaA (438 aa).

Helical transmembrane passes span Phe23–Leu43, Phe62–Leu82, Ser104–Leu124, Gly133–Gly153, Val162–Phe182, Thr185–Leu205, Val221–Leu241, Phe302–Val322, Leu337–Ile357, Trp372–Ile392, and Ile410–Leu430.

This sequence belongs to the NhaA Na(+)/H(+) (TC 2.A.33) antiporter family.

The protein localises to the cell inner membrane. It catalyses the reaction Na(+)(in) + 2 H(+)(out) = Na(+)(out) + 2 H(+)(in). Functionally, na(+)/H(+) antiporter that extrudes sodium in exchange for external protons. The chain is Na(+)/H(+) antiporter NhaA from Helicobacter pylori (strain HPAG1).